We begin with the raw amino-acid sequence, 243 residues long: MRAPQHNSDFSRTVNQLADDPNPYEPEVGSMPKNEFSRADLDNVNKTGTTTIGITTEDGVVIATDMRASLGGRFVSNKNVQKVEQIHPTGALTMVGSVGGAQSFIGSLRAEVNLYEARRGEPISMDALATLAGNFARGGPFFAIHPILGGVDEEGSHVYSIDPAGGVMEDDYTVTGSGMQLAYGLLEQEFEEDLSNDEATTVAARAIKSAAERDTGSGNGVFLCEITDEGVDIHGHHDFDEVV.

The segment covering 1 to 16 (MRAPQHNSDFSRTVNQ) has biased composition (polar residues). The tract at residues 1 to 29 (MRAPQHNSDFSRTVNQLADDPNPYEPEVG) is disordered. Residues 1–48 (MRAPQHNSDFSRTVNQLADDPNPYEPEVGSMPKNEFSRADLDNVNKTG) constitute a propeptide, removed in mature form; by autocatalysis. Threonine 49 serves as the catalytic Nucleophile.

This sequence belongs to the peptidase T1B family. The 20S proteasome core is composed of 14 alpha and 14 beta subunits that assemble into four stacked heptameric rings, resulting in a barrel-shaped structure. The two inner rings, each composed of seven catalytic beta subunits, are sandwiched by two outer rings, each composed of seven alpha subunits. The catalytic chamber with the active sites is on the inside of the barrel. Has a gated structure, the ends of the cylinder being occluded by the N-termini of the alpha-subunits. Is capped at one or both ends by the proteasome regulatory ATPase, PAN.

The protein resides in the cytoplasm. It catalyses the reaction Cleavage of peptide bonds with very broad specificity.. With respect to regulation, the formation of the proteasomal ATPase PAN-20S proteasome complex, via the docking of the C-termini of PAN into the intersubunit pockets in the alpha-rings, triggers opening of the gate for substrate entry. Interconversion between the open-gate and close-gate conformations leads to a dynamic regulation of the 20S proteasome proteolysis activity. Component of the proteasome core, a large protease complex with broad specificity involved in protein degradation. In Natrialba magadii (strain ATCC 43099 / DSM 3394 / CCM 3739 / CIP 104546 / IAM 13178 / JCM 8861 / NBRC 102185 / NCIMB 2190 / MS3) (Natronobacterium magadii), this protein is Proteasome subunit beta.